We begin with the raw amino-acid sequence, 158 residues long: NADH-quinone oxidoreductase subunit B (158 aa).

[4Fe-4S] cluster-binding residues include cysteine 37, cysteine 38, cysteine 102, and cysteine 132.

Belongs to the complex I 20 kDa subunit family. NDH-1 is composed of 14 different subunits. Subunits NuoB, C, D, E, F, and G constitute the peripheral sector of the complex. Requires [4Fe-4S] cluster as cofactor.

It is found in the cell inner membrane. It catalyses the reaction a quinone + NADH + 5 H(+)(in) = a quinol + NAD(+) + 4 H(+)(out). NDH-1 shuttles electrons from NADH, via FMN and iron-sulfur (Fe-S) centers, to quinones in the respiratory chain. Couples the redox reaction to proton translocation (for every two electrons transferred, four hydrogen ions are translocated across the cytoplasmic membrane), and thus conserves the redox energy in a proton gradient. In Dechloromonas aromatica (strain RCB), this protein is NADH-quinone oxidoreductase subunit B.